Consider the following 564-residue polypeptide: Septation ring formation regulator EzrA (564 aa).

Residues 1-4 lie on the Extracellular side of the membrane; it reads MVLY. Residues 5 to 23 traverse the membrane as a helical segment; the sequence is IILAIIVIILIAVGVLFYL. The Cytoplasmic portion of the chain corresponds to 24 to 564; the sequence is RSNKRQIIEK…KHIEEEVIKQ (541 aa). Coiled coils occupy residues 99–138, 190–223, 271–300, 350–435, and 471–550; these read SFNA…YKDN, DGNY…LIRE, LISR…LIEH, VRQF…RRLL, and VKQL…ESVE.

The protein belongs to the EzrA family.

Its subcellular location is the cell membrane. Negative regulator of FtsZ ring formation; modulates the frequency and position of FtsZ ring formation. Inhibits FtsZ ring formation at polar sites. Interacts either with FtsZ or with one of its binding partners to promote depolymerization. The polypeptide is Septation ring formation regulator EzrA (Staphylococcus aureus (strain JH1)).